We begin with the raw amino-acid sequence, 333 residues long: MTSAIFLAMLCLGMALPSPAPDPILDVEWQKWKIKYGKAYSLEEEGQKRAVWEDNMKKIKLHNGENGLGKHGFTMEMNAFGDMTLEEFRKVMIEIPVPTVKKGKSVQKRLSVNLPKFINWKKRGYVTPVQTQGRCNSCWAFSVTGAIEGQMFRKTGQLIPLSVQNLVDCSRPQGNWGCYLGNTYLALHYVMENGGLESEATYPYEEKDGSCRYSPENSTANITGFEFVPKNEDALMNAVASIGPISVAIDARHASFLFYKRGIYYEPNCSSCVVTHSMLLVGYGFTGRESDGRKYWLVKNSMGTQWGNKGYMKISRDKGNHCGIATYALYPRV.

An N-terminal signal peptide occupies residues 1–15 (MTSAIFLAMLCLGMA). The propeptide at 16–113 (LPSPAPDPIL…KSVQKRLSVN (98 aa)) is activation peptide. 2 cysteine pairs are disulfide-bonded: cysteine 135/cysteine 178 and cysteine 169/cysteine 211. Cysteine 138 is an active-site residue. Asparagine 217, asparagine 221, and asparagine 268 each carry an N-linked (GlcNAc...) asparagine glycan. An intrachain disulfide couples cysteine 269 to cysteine 322. Residues histidine 276 and asparagine 300 contribute to the active site.

The protein belongs to the peptidase C1 family. As to expression, placenta.

It localises to the lysosome. In Mus musculus (Mouse), this protein is Cathepsin M (Ctsm).